The chain runs to 170 residues: Crossover junction endodeoxyribonuclease RuvC (170 aa).

Residues Asp-11, Glu-71, and Asp-143 contribute to the active site. Positions 11, 71, and 143 each coordinate Mg(2+).

The protein belongs to the RuvC family. As to quaternary structure, homodimer which binds Holliday junction (HJ) DNA. The HJ becomes 2-fold symmetrical on binding to RuvC with unstacked arms; it has a different conformation from HJ DNA in complex with RuvA. In the full resolvosome a probable DNA-RuvA(4)-RuvB(12)-RuvC(2) complex forms which resolves the HJ. Requires Mg(2+) as cofactor.

Its subcellular location is the cytoplasm. The catalysed reaction is Endonucleolytic cleavage at a junction such as a reciprocal single-stranded crossover between two homologous DNA duplexes (Holliday junction).. In terms of biological role, the RuvA-RuvB-RuvC complex processes Holliday junction (HJ) DNA during genetic recombination and DNA repair. Endonuclease that resolves HJ intermediates. Cleaves cruciform DNA by making single-stranded nicks across the HJ at symmetrical positions within the homologous arms, yielding a 5'-phosphate and a 3'-hydroxyl group; requires a central core of homology in the junction. The consensus cleavage sequence is 5'-(A/T)TT(C/G)-3'. Cleavage occurs on the 3'-side of the TT dinucleotide at the point of strand exchange. HJ branch migration catalyzed by RuvA-RuvB allows RuvC to scan DNA until it finds its consensus sequence, where it cleaves and resolves the cruciform DNA. This is Crossover junction endodeoxyribonuclease RuvC from Sinorhizobium fredii (strain NBRC 101917 / NGR234).